The sequence spans 259 residues: Haloacid dehalogenase-like hydrolase domain-containing protein 2 (259 aa).

Positions 13 and 15 each coordinate Mg(2+). Residues 13–15 and 46–47 contribute to the substrate site; these read DLS and TN. Residues 47 to 71 are a coiled coil; the sequence is NTTKESKQDLLERLRKLEFDISEDE. Lys-50 carries the post-translational modification N6-succinyllysine. Residue Lys-179 coordinates substrate. Asp-204 contacts Mg(2+).

This sequence belongs to the HAD-like hydrolase superfamily. Mg(2+) serves as cofactor.

The chain is Haloacid dehalogenase-like hydrolase domain-containing protein 2 (HDHD2) from Pongo abelii (Sumatran orangutan).